A 381-amino-acid chain; its full sequence is Creatine kinase B-type (381 aa).

S4 carries the phosphoserine modification. The 88-residue stretch at 11-98 (KLRFPAEDEF…FDPIIEDRHG (88 aa)) folds into the Phosphagen kinase N-terminal domain. T35 carries the phosphothreonine modification. Residue K45 forms a Glycyl lysine isopeptide (Lys-Gly) (interchain with G-Cter in ubiquitin) linkage. V72 lines the creatine pocket. The span at 96 to 110 (RHGGYKPSDEHKTDL) shows a compositional bias: basic and acidic residues. The tract at residues 96–122 (RHGGYKPSDEHKTDLNPDNLQGGDDLD) is disordered. Glycyl lysine isopeptide (Lys-Gly) (interchain with G-Cter in ubiquitin) cross-links involve residues K101 and K107. Y125 is subject to Phosphotyrosine. The Phosphagen kinase C-terminal domain maps to 125 to 367 (YVLSSRVRTG…KLLIEMEQRL (243 aa)). ATP contacts are provided by residues 128 to 132 (SSRVR), R130, R132, and H191. Residues 130 to 138 (RVRTGRSIR) form an internal MTS-like signal region. At S199 the chain carries Phosphoserine. Position 232 (E232) interacts with creatine. R236 is an ATP binding site. The residue at position 269 (Y269) is a 3'-nitrotyrosine. S285 is a binding site for creatine. R292 lines the ATP pocket. Phosphoserine is present on S309. ATP contacts are provided by residues R320, 320 to 325 (RGTGGV), and D335. At T322 the chain carries Phosphothreonine. A Glycyl lysine isopeptide (Lys-Gly) (interchain with G-Cter in ubiquitin) cross-link involves residue K381.

The protein belongs to the ATP:guanido phosphotransferase family. In terms of assembly, dimer of identical or non-identical chains, which can be either B (brain type) or M (muscle type). With MM being the major form in skeletal muscle and myocardium, MB existing in myocardium, and BB existing in many tissues, especially brain. Interacts with SLC12A6 (via C-terminus); the interaction may be required for SLC12A6 potassium-chloride cotransport activity. Ubiquitinated by the ECS(ASB9) complex, leading to its degradation by the proteasome.

It is found in the cytoplasm. It localises to the cytosol. Its subcellular location is the mitochondrion. The protein localises to the cell membrane. The enzyme catalyses creatine + ATP = N-phosphocreatine + ADP + H(+). Reversibly catalyzes the transfer of phosphate between ATP and various phosphogens (e.g. creatine phosphate). Creatine kinase isoenzymes play a central role in energy transduction in tissues with large, fluctuating energy demands, such as skeletal muscle, heart, brain and spermatozoa. Acts as a key regulator of adaptive thermogenesis as part of the futile creatine cycle: localizes to the mitochondria of thermogenic fat cells and acts by mediating phosphorylation of creatine to initiate a futile cycle of creatine phosphorylation and dephosphorylation. During the futile creatine cycle, creatine and N-phosphocreatine are in a futile cycle, which dissipates the high energy charge of N-phosphocreatine as heat without performing any mechanical or chemical work. This Homo sapiens (Human) protein is Creatine kinase B-type.